Here is a 356-residue protein sequence, read N- to C-terminus: tRNA N6-adenosine threonylcarbamoyltransferase (356 aa).

Residues histidine 110 and histidine 114 each contribute to the Fe cation site. Residues 133–137 (LVSGG), aspartate 166, glycine 179, and asparagine 276 each bind substrate. Aspartate 304 is a binding site for Fe cation.

This sequence belongs to the KAE1 / TsaD family. The cofactor is Fe(2+).

The protein localises to the cytoplasm. The enzyme catalyses L-threonylcarbamoyladenylate + adenosine(37) in tRNA = N(6)-L-threonylcarbamoyladenosine(37) in tRNA + AMP + H(+). Its function is as follows. Required for the formation of a threonylcarbamoyl group on adenosine at position 37 (t(6)A37) in tRNAs that read codons beginning with adenine. Is involved in the transfer of the threonylcarbamoyl moiety of threonylcarbamoyl-AMP (TC-AMP) to the N6 group of A37, together with TsaE and TsaB. TsaD likely plays a direct catalytic role in this reaction. The sequence is that of tRNA N6-adenosine threonylcarbamoyltransferase from Teredinibacter turnerae (strain ATCC 39867 / T7901).